The chain runs to 31 residues: Photosystem II reaction center protein T (31 aa).

The helical transmembrane segment at 3 to 23 threads the bilayer; the sequence is ALVYTFLLVTTLGILFFSIIF.

It belongs to the PsbT family. As to quaternary structure, PSII is composed of 1 copy each of membrane proteins PsbA, PsbB, PsbC, PsbD, PsbE, PsbF, PsbH, PsbI, PsbJ, PsbK, PsbL, PsbM, PsbT, PsbX, PsbY, PsbZ, Psb30/Ycf12, at least 3 peripheral proteins of the oxygen-evolving complex and a large number of cofactors. It forms dimeric complexes.

The protein resides in the plastid. It localises to the cyanelle thylakoid membrane. Its function is as follows. Found at the monomer-monomer interface of the photosystem II (PS II) dimer, plays a role in assembly and dimerization of PSII. PSII is a light-driven water plastoquinone oxidoreductase, using light energy to abstract electrons from H(2)O, generating a proton gradient subsequently used for ATP formation. The polypeptide is Photosystem II reaction center protein T (Cyanophora paradoxa).